Consider the following 366-residue polypeptide: Glycerol-3-phosphate dehydrogenase [NAD(+)], glycosomal (366 aa).

NAD(+) is bound by residues 22–27 (GSGAFG), Phe97, Lys125, and Ala157. Residue Lys125 coordinates substrate. The active-site Proton acceptor is Lys210. Residues Arg274, Val298, and Glu300 each contribute to the NAD(+) site. 274-275 (RN) provides a ligand contact to substrate. The short motif at 364 to 366 (SKL) is the Microbody targeting signal element.

Belongs to the NAD-dependent glycerol-3-phosphate dehydrogenase family. As to quaternary structure, homodimer.

It is found in the glycosome. It catalyses the reaction sn-glycerol 3-phosphate + NAD(+) = dihydroxyacetone phosphate + NADH + H(+). In Leishmania mexicana, this protein is Glycerol-3-phosphate dehydrogenase [NAD(+)], glycosomal (GPD).